The following is a 632-amino-acid chain: tRNA uridine 5-carboxymethylaminomethyl modification enzyme MnmG (632 aa).

Residues 15–20 (GAGHAG), isoleucine 127, and serine 182 contribute to the FAD site. Position 276 to 290 (276 to 290 (GPRYCPSIEDKIVRF)) interacts with NAD(+). Glutamine 373 contacts FAD.

Belongs to the MnmG family. As to quaternary structure, homodimer. Heterotetramer of two MnmE and two MnmG subunits. The cofactor is FAD.

It localises to the cytoplasm. In terms of biological role, NAD-binding protein involved in the addition of a carboxymethylaminomethyl (cmnm) group at the wobble position (U34) of certain tRNAs, forming tRNA-cmnm(5)s(2)U34. In Streptococcus pyogenes serotype M4 (strain MGAS10750), this protein is tRNA uridine 5-carboxymethylaminomethyl modification enzyme MnmG.